A 405-amino-acid chain; its full sequence is 1-deoxy-D-xylulose 5-phosphate reductoisomerase (405 aa).

8 residues coordinate NADPH: Thr16, Gly17, Ser18, Ile19, Gly42, Arg43, Asn44, and Asn130. Lys131 is a binding site for 1-deoxy-D-xylulose 5-phosphate. NADPH is bound at residue Glu132. Asp156 contacts Mn(2+). Positions 157, 158, 192, and 215 each coordinate 1-deoxy-D-xylulose 5-phosphate. Glu158 contacts Mn(2+). Residue Gly221 participates in NADPH binding. The 1-deoxy-D-xylulose 5-phosphate site is built by Ser228, Asn233, Lys234, and Glu237. Mn(2+) is bound at residue Glu237.

It belongs to the DXR family. It depends on Mg(2+) as a cofactor. The cofactor is Mn(2+).

The enzyme catalyses 2-C-methyl-D-erythritol 4-phosphate + NADP(+) = 1-deoxy-D-xylulose 5-phosphate + NADPH + H(+). The protein operates within isoprenoid biosynthesis; isopentenyl diphosphate biosynthesis via DXP pathway; isopentenyl diphosphate from 1-deoxy-D-xylulose 5-phosphate: step 1/6. Functionally, catalyzes the NADPH-dependent rearrangement and reduction of 1-deoxy-D-xylulose-5-phosphate (DXP) to 2-C-methyl-D-erythritol 4-phosphate (MEP). This is 1-deoxy-D-xylulose 5-phosphate reductoisomerase from Pasteurella multocida (strain Pm70).